A 412-amino-acid polypeptide reads, in one-letter code: Divalent metal cation transporter MntH (412 aa).

The Cytoplasmic segment spans residues 1-19 (MTNYRVESSSGRAARKMRL). The helical transmembrane segment at 20-39 (ALMGPAFIAAIGYIDPGNFA) threads the bilayer. Residues 40–51 (TNIQAGASFGYQ) are Periplasmic-facing. The chain crosses the membrane as a helical span at residues 52-71 (LLWVVVWANLMAMLIQILSA). At 72 to 95 (KLGIATGKNLAEQIRDHYPRPVVW) the chain is on the cytoplasmic side. The helical transmembrane segment at 96-118 (FYWVQAEIIAMATDLAEFIGAAI) threads the bilayer. Over 119–125 (GFKLILG) the chain is Periplasmic. A helical membrane pass occupies residues 126-145 (VSLLQGAVLTGIATFLILML). Over 146–155 (QRRGQKPLEK) the chain is Cytoplasmic. A helical transmembrane segment spans residues 156-175 (VIGGLLLFVAAAYIVELIFS). Topologically, residues 176–196 (QPNLAQLGKGMVIPSLPTSEA) are periplasmic. Residues 197–220 (VFLAAGVLGATIMPHVIYLHSSLT) form a helical membrane-spanning segment. The Cytoplasmic portion of the chain corresponds to 221–238 (QHLHGGSRQQRYSATKWD). The chain crosses the membrane as a helical span at residues 239–258 (VAIAMTIAGFVNLAMMATAA). At 259–276 (AAFHFSGHTGVADLDEAY) the chain is on the periplasmic side. A helical membrane pass occupies residues 277–297 (LTLQPLLSHAAATVFGLSLVA). The Cytoplasmic segment spans residues 298–327 (AGLSSTVVGTLAGQVVMQGFIRFHIPLWVR). A helical membrane pass occupies residues 328–344 (RTVTMLPSFIVILMGLD). Topologically, residues 345 to 350 (PTRILV) are periplasmic. The chain crosses the membrane as a helical span at residues 351-370 (MSQVLLSFGIALALVPLLIF). At 371-387 (TSDSKLMGDLVNSKRVK) the chain is on the cytoplasmic side. A helical transmembrane segment spans residues 388-406 (QTGWVIVVLVVALNIWLLV). The Periplasmic portion of the chain corresponds to 407-412 (GTALGL).

This sequence belongs to the NRAMP family.

Its subcellular location is the cell inner membrane. H(+)-stimulated, divalent metal cation uptake system. The sequence is that of Divalent metal cation transporter MntH from Escherichia fergusonii (strain ATCC 35469 / DSM 13698 / CCUG 18766 / IAM 14443 / JCM 21226 / LMG 7866 / NBRC 102419 / NCTC 12128 / CDC 0568-73).